Here is a 630-residue protein sequence, read N- to C-terminus: Probable potassium transport system protein Kup (630 aa).

Helical transmembrane passes span 19–39 (GLIGVLGVVYGDIGTSPLYAV), 59–79 (LLSLIFWALIITVTIKYVLLI), 108–128 (WIIGIIGICGAGLFFGDATIT), 145–165 (PGLKEFVLPIAIAVILVLFFV), 173–193 (VGGAFGPIMVIWFVVIGALGL), 220–240 (LLAFIALGSVVLAVTGAEALY), 255–275 (WLFFVLPCLLLNYFGQGALVI), 284–304 (PFFFLLPHALVVPMVILATIA), 345–365 (IYVPPVNSFLFVVVVLLVLGF), 374–394 (AYGIAVTGTFLSTNALAAFVY), 405–425 (TVLVFGAIGLVDFAFFSSNVL), and 427–447 (VFDGGWVPLAIGFSLITVMTT).

It belongs to the HAK/KUP transporter (TC 2.A.72) family.

The protein resides in the cell inner membrane. It catalyses the reaction K(+)(in) + H(+)(in) = K(+)(out) + H(+)(out). Its function is as follows. Transport of potassium into the cell. Likely operates as a K(+):H(+) symporter. The protein is Probable potassium transport system protein Kup of Acidiphilium cryptum (strain JF-5).